The following is a 148-amino-acid chain: Putative anti-anti-sigma factor Rv2638 (148 aa).

Residues 30-141 (LRATTDGSGA…PTVDTALGKG (112 aa)) enclose the STAS domain.

This sequence belongs to the anti-sigma-factor antagonist family. As to quaternary structure, interacts with unphosphorylated OprA.

The polypeptide is Putative anti-anti-sigma factor Rv2638 (Mycobacterium tuberculosis (strain ATCC 25618 / H37Rv)).